The sequence spans 315 residues: Glutaminase (315 aa).

Substrate contacts are provided by Ser70, Asn120, Glu166, Asn173, Tyr197, Tyr249, and Val267.

Belongs to the glutaminase family. In terms of assembly, homotetramer.

It catalyses the reaction L-glutamine + H2O = L-glutamate + NH4(+). This chain is Glutaminase, found in Mesorhizobium japonicum (strain LMG 29417 / CECT 9101 / MAFF 303099) (Mesorhizobium loti (strain MAFF 303099)).